The sequence spans 448 residues: MTTILKHLPVGQRIGIAFSGGLDTSAALLWMRQKGAVPYAYTANLGQPDEDDYEEIPRRAMEYGAENARLIDCRKQLVAEGIAAIQCGAFHNTTAGVTYFNTTPLGRAVTGTMLVAAMKEDGVNIWGDGSTYKGNDIERFYRYGLLTNAELKIYKPWLDTDFIDELGGRQEMSEFMSQAGFGYKMSAEKAYSTDSNILGATHEAKDLEFLNSSVKIVNPIMGVKFWDENVKVPAEEVTIRFERGHPVALNGKTFADDVELMLEANRIGGRHGLGMSDQIENRIIEAKSRGIYEAPGMALLHIAYERLVTGIHNEDTIEQYHANGRQLGRFLYQGRWFDSQALMLRDASQRWIASAITGEVTLELRRGNDYSIMNTVSDNLTYKPERLTMEKGDSVFSPDDRIGQLTMRNLDITDTREKLFNYVETGLLSSSASTGLPQVGQLQDKTEK.

Residues 17–25 (AFSGGLDTS) and alanine 43 contribute to the ATP site. Residue tyrosine 99 coordinates L-citrulline. The ATP site is built by glycine 129 and threonine 131. L-aspartate-binding residues include threonine 131, asparagine 135, and aspartate 136. L-citrulline is bound at residue asparagine 135. Aspartate 136 provides a ligand contact to ATP. Residues arginine 139 and serine 192 each coordinate L-citrulline. Position 194 (aspartate 194) interacts with ATP. L-citrulline contacts are provided by threonine 201, glutamate 203, and glutamate 280.

Belongs to the argininosuccinate synthase family. Type 2 subfamily. As to quaternary structure, homotetramer.

It is found in the cytoplasm. It carries out the reaction L-citrulline + L-aspartate + ATP = 2-(N(omega)-L-arginino)succinate + AMP + diphosphate + H(+). The protein operates within amino-acid biosynthesis; L-arginine biosynthesis; L-arginine from L-ornithine and carbamoyl phosphate: step 2/3. In Pectobacterium carotovorum subsp. carotovorum (strain PC1), this protein is Argininosuccinate synthase.